A 147-amino-acid chain; its full sequence is Hemoglobin subunit delta (147 aa).

The Globin domain maps to 3–147 (HLTADETALV…VANALAHKYH (145 aa)). Serine 51 carries the phosphoserine modification. Heme b is bound by residues histidine 64 and histidine 93.

Belongs to the globin family. As to quaternary structure, heterotetramer of two delta chains and two alpha chains. Red blood cells.

This Dugong dugon (Dugong) protein is Hemoglobin subunit delta (HBD).